The primary structure comprises 159 residues: NADH dehydrogenase [ubiquinone] 1 beta subcomplex subunit 10 (159 aa).

It belongs to the complex I NDUFB10 subunit family. Complex I is composed of 45 different subunits.

The protein resides in the mitochondrion inner membrane. Accessory subunit of the mitochondrial membrane respiratory chain NADH dehydrogenase (Complex I), that is believed not to be involved in catalysis. Complex I functions in the transfer of electrons from NADH to the respiratory chain. The immediate electron acceptor for the enzyme is believed to be ubiquinone. The polypeptide is NADH dehydrogenase [ubiquinone] 1 beta subcomplex subunit 10 (Bombyx mori (Silk moth)).